A 170-amino-acid chain; its full sequence is Large ribosomal subunit protein bL9 (170 aa).

Positions R149–E170 are disordered. The segment covering A153–E170 has biased composition (acidic residues).

It belongs to the bacterial ribosomal protein bL9 family.

Functionally, binds to the 23S rRNA. In Oleidesulfovibrio alaskensis (strain ATCC BAA-1058 / DSM 17464 / G20) (Desulfovibrio alaskensis), this protein is Large ribosomal subunit protein bL9.